A 199-amino-acid polypeptide reads, in one-letter code: Recombination protein RecR (199 aa).

The segment at 57-72 (CSICGNITEDDPCVIC) adopts a C4-type zinc-finger fold. In terms of domain architecture, Toprim spans 80–176 (STVLVVEEAK…KVTRLAHGLS (97 aa)).

It belongs to the RecR family.

Its function is as follows. May play a role in DNA repair. It seems to be involved in an RecBC-independent recombinational process of DNA repair. It may act with RecF and RecO. The sequence is that of Recombination protein RecR from Lactiplantibacillus plantarum (strain ATCC BAA-793 / NCIMB 8826 / WCFS1) (Lactobacillus plantarum).